A 205-amino-acid polypeptide reads, in one-letter code: Holliday junction branch migration complex subunit RuvA (205 aa).

The interval 1–64 (MIGRLRGLLV…EDAQLLYGFI (64 aa)) is domain I. The domain II stretch occupies residues 65-143 (TKQERALFRL…SLMEASHGNE (79 aa)). The segment at 144–156 (REFVLQSNYTPAP) is flexible linker. Residues 157 to 205 (VVNTAEEDAISALLALGYKPAQASKAVSSVFEEGMDSETLIKASLKSML) form a domain III region.

Belongs to the RuvA family. Homotetramer. Forms an RuvA(8)-RuvB(12)-Holliday junction (HJ) complex. HJ DNA is sandwiched between 2 RuvA tetramers; dsDNA enters through RuvA and exits via RuvB. An RuvB hexamer assembles on each DNA strand where it exits the tetramer. Each RuvB hexamer is contacted by two RuvA subunits (via domain III) on 2 adjacent RuvB subunits; this complex drives branch migration. In the full resolvosome a probable DNA-RuvA(4)-RuvB(12)-RuvC(2) complex forms which resolves the HJ.

The protein resides in the cytoplasm. The RuvA-RuvB-RuvC complex processes Holliday junction (HJ) DNA during genetic recombination and DNA repair, while the RuvA-RuvB complex plays an important role in the rescue of blocked DNA replication forks via replication fork reversal (RFR). RuvA specifically binds to HJ cruciform DNA, conferring on it an open structure. The RuvB hexamer acts as an ATP-dependent pump, pulling dsDNA into and through the RuvAB complex. HJ branch migration allows RuvC to scan DNA until it finds its consensus sequence, where it cleaves and resolves the cruciform DNA. In Shewanella loihica (strain ATCC BAA-1088 / PV-4), this protein is Holliday junction branch migration complex subunit RuvA.